The sequence spans 776 residues: Protein STRUBBELIG-RECEPTOR FAMILY 3 (776 aa).

Residues 1–29 (MAAKRSIYCLLLLPLLLSLLIWIPSISLA) form the signal peptide. Over 30–35 (ATNPDD) the chain is Cytoplasmic. The chain crosses the membrane as a helical span at residues 36-56 (VAAINGLFAALGAPVLPGWIA). The Extracellular segment spans residues 57 to 316 (SGGDPCGEAW…KGKNSSHTKK (260 aa)). Residue Asn72 is glycosylated (N-linked (GlcNAc...) asparagine). LRR repeat units follow at residues 99-120 (SIRG…TLPV), 121-143 (TLQH…LGTL), 145-167 (FLND…FQNL), 169-191 (GLIN…MENL), 193-215 (TLTT…QGLP), and 216-236 (LQDL…KLLS). N-linked (GlcNAc...) asparagine glycosylation occurs at Asn179. N-linked (GlcNAc...) asparagine glycosylation is found at Asn248 and Asn253. Residues 251–311 (MINSTSTAPS…SSENSKGKNS (61 aa)) form a disordered region. Residues 254-268 (STSTAPSLSPSLSPT) show a composition bias toward low complexity. The span at 269–284 (KPAPTRPFSGVPPPPN) shows a compositional bias: pro residues. Over residues 298-309 (SEGSSSENSKGK) the composition is skewed to low complexity. Asn310 carries an N-linked (GlcNAc...) asparagine glycan. The helical transmembrane segment at 317–337 (IILIAFAGVLVFIILVLAILL) threads the bilayer. At 338-776 (LLPKCARRRE…RHGSGDSTAD (439 aa)) the chain is on the cytoplasmic side. Residues 355 to 440 (PHQVGADRGS…PPPPPPPPPP (86 aa)) form a disordered region. Positions 381 to 407 (RSEKVQREPFKKAGEEPKVLHDLERLR) are enriched in basic and acidic residues. Over residues 426–440 (MPPPPPPPPPPPPPP) the composition is skewed to pro residues. Residues 485–763 (FAQENLIGSG…EVVQDLLDMI (279 aa)) enclose the Protein kinase domain. ATP contacts are provided by residues 491-499 (IGSGMLGSV) and Lys513.

This sequence belongs to the protein kinase superfamily. Ser/Thr protein kinase family. In terms of tissue distribution, expressed in seedlings, roots, stems, leaves, flowers and siliques.

Its subcellular location is the membrane. Functionally, not essential for epidermal patterning and not redundant with STRUBBELIG. The protein is Protein STRUBBELIG-RECEPTOR FAMILY 3 (SRF3) of Arabidopsis thaliana (Mouse-ear cress).